Here is a 223-residue protein sequence, read N- to C-terminus: ATP synthase subunit a 2 (223 aa).

5 helical membrane passes run Val17–Cys37, Phe77–Leu97, Lys106–Val126, Phe173–Leu193, and Ile195–Ala215.

The protein belongs to the ATPase A chain family. In terms of assembly, F-type ATPases have 2 components, CF(1) - the catalytic core - and CF(0) - the membrane proton channel. CF(1) has five subunits: alpha(3), beta(3), gamma(1), delta(1), epsilon(1). CF(0) has four main subunits: a, b, b' and c.

Its subcellular location is the cell inner membrane. Its function is as follows. Key component of the proton channel; it plays a direct role in the translocation of protons across the membrane. In Bradyrhizobium sp. (strain BTAi1 / ATCC BAA-1182), this protein is ATP synthase subunit a 2.